A 370-amino-acid polypeptide reads, in one-letter code: Uroporphyrinogen decarboxylase (370 aa).

Residues 29 to 33, Asp-79, Tyr-155, Ser-210, and His-342 each bind substrate; that span reads RQAGR.

Belongs to the uroporphyrinogen decarboxylase family. Homodimer.

Its subcellular location is the cytoplasm. It carries out the reaction uroporphyrinogen III + 4 H(+) = coproporphyrinogen III + 4 CO2. The protein operates within porphyrin-containing compound metabolism; protoporphyrin-IX biosynthesis; coproporphyrinogen-III from 5-aminolevulinate: step 4/4. In terms of biological role, catalyzes the decarboxylation of four acetate groups of uroporphyrinogen-III to yield coproporphyrinogen-III. This chain is Uroporphyrinogen decarboxylase, found in Variovorax paradoxus (strain S110).